The sequence spans 223 residues: uncharacterized protein (223 aa).

This is an uncharacterized protein from Dryophytes versicolor (chameleon treefrog).